A 505-amino-acid polypeptide reads, in one-letter code: Maturase K (505 aa).

The protein belongs to the intron maturase 2 family. MatK subfamily.

The protein resides in the plastid. Its subcellular location is the chloroplast. Its function is as follows. Usually encoded in the trnK tRNA gene intron. Probably assists in splicing its own and other chloroplast group II introns. This is Maturase K from Glycine max (Soybean).